A 482-amino-acid polypeptide reads, in one-letter code: tRNA sulfurtransferase (482 aa).

The region spanning 61 to 165 (LAIRDALTRI…DDRLLLIKGR (105 aa)) is the THUMP domain. Residues 183–184 (LI), K265, G287, and Q296 each bind ATP. A disulfide bridge links C344 with C456. A Rhodanese domain is found at 404-482 (FGPNDVILDI…GFNNVKVYRP (79 aa)). The active-site Cysteine persulfide intermediate is the C456.

Belongs to the ThiI family.

Its subcellular location is the cytoplasm. The catalysed reaction is [ThiI sulfur-carrier protein]-S-sulfanyl-L-cysteine + a uridine in tRNA + 2 reduced [2Fe-2S]-[ferredoxin] + ATP + H(+) = [ThiI sulfur-carrier protein]-L-cysteine + a 4-thiouridine in tRNA + 2 oxidized [2Fe-2S]-[ferredoxin] + AMP + diphosphate. It carries out the reaction [ThiS sulfur-carrier protein]-C-terminal Gly-Gly-AMP + S-sulfanyl-L-cysteinyl-[cysteine desulfurase] + AH2 = [ThiS sulfur-carrier protein]-C-terminal-Gly-aminoethanethioate + L-cysteinyl-[cysteine desulfurase] + A + AMP + 2 H(+). The protein operates within cofactor biosynthesis; thiamine diphosphate biosynthesis. Catalyzes the ATP-dependent transfer of a sulfur to tRNA to produce 4-thiouridine in position 8 of tRNAs, which functions as a near-UV photosensor. Also catalyzes the transfer of sulfur to the sulfur carrier protein ThiS, forming ThiS-thiocarboxylate. This is a step in the synthesis of thiazole, in the thiamine biosynthesis pathway. The sulfur is donated as persulfide by IscS. This Shigella sonnei (strain Ss046) protein is tRNA sulfurtransferase.